The sequence spans 446 residues: 3-phosphoshikimate 1-carboxyvinyltransferase (446 aa).

Positions 35, 36, and 40 each coordinate 3-phosphoshikimate. Lysine 35 contributes to the phosphoenolpyruvate binding site. Residues glycine 108 and arginine 137 each coordinate phosphoenolpyruvate. 4 residues coordinate 3-phosphoshikimate: serine 182, glutamine 184, aspartate 332, and lysine 359. Glutamine 184 serves as a coordination point for phosphoenolpyruvate. Aspartate 332 acts as the Proton acceptor in catalysis. The phosphoenolpyruvate site is built by arginine 363 and arginine 405.

The protein belongs to the EPSP synthase family. Monomer.

Its subcellular location is the cytoplasm. The catalysed reaction is 3-phosphoshikimate + phosphoenolpyruvate = 5-O-(1-carboxyvinyl)-3-phosphoshikimate + phosphate. Its pathway is metabolic intermediate biosynthesis; chorismate biosynthesis; chorismate from D-erythrose 4-phosphate and phosphoenolpyruvate: step 6/7. Functionally, catalyzes the transfer of the enolpyruvyl moiety of phosphoenolpyruvate (PEP) to the 5-hydroxyl of shikimate-3-phosphate (S3P) to produce enolpyruvyl shikimate-3-phosphate and inorganic phosphate. This Acaryochloris marina (strain MBIC 11017) protein is 3-phosphoshikimate 1-carboxyvinyltransferase.